The following is an 864-amino-acid chain: E3 ubiquitin-protein ligase Itchy (864 aa).

The 115-residue stretch at 1–115 (MSDSGPQLDS…LKSNNMKLEE (115 aa)) folds into the C2 domain. The residue at position 2 (Ser-2) is an N-acetylserine. Over residues 151–164 (NGETSCSESTTQND) the composition is skewed to polar residues. The tract at residues 151–294 (NGETSCSEST…SQAPLPPGWE (144 aa)) is disordered. Positions 165–174 (DGCRTRDDTR) are enriched in basic and acidic residues. Residues 195 to 206 (NGNNSPSLSNGG) show a composition bias toward low complexity. A Phosphoserine; by MAPK8 modification is found at Ser-199. A compositionally biased stretch (pro residues) spans 210–224 (SRPPRPSRPPPPTPR). Thr-222 carries the phosphothreonine; by MAPK8 modification. The segment covering 230–259 (NGSPSTNSDSDGSSTGSLPPTNTNVNTSTS) has biased composition (low complexity). At Ser-232 the chain carries Phosphoserine; by MAPK8. WW domains follow at residues 287–320 (APLPPGWEQRVDQHGRVYYVDHVEKRTTWDRPEP) and 319–352 (EPLPPGWERRVDNMGRIYYVDHFTRTTTWQRPTL). Position 346 is a phosphothreonine; by SGK3 (Thr-346). Residues 356–432 (RNYEQWQLQR…RITQWEDPRS (77 aa)) form a required for interaction with FYN region. Phosphotyrosine; by FYN is present on Tyr-381. WW domains follow at residues 399–432 (GPLPPGWEKRTDSNGRVYFVNHNTRITQWEDPRS) and 439–472 (KPLPEGWEMRFTVDGIPYFVDHNRRATTYIDPRT). A Phosphoserine; by SGK3 modification is found at Ser-411. Residues 530–864 (SPQDLRRRLW…IEETEGFGQE (335 aa)) form the HECT domain. An MAP kinase docking site region spans residues 535 to 544 (RRRLWVIFPG). The Glycyl thioester intermediate role is filled by Cys-832.

Monomer. Part of a ternary complex composed of SMAD3, ITCH/AIP4 and NEDD9/HEF1; within the complex NEDD9/HEF1 interacts (via N-terminus) with ITCH/AIP4 (via WW domains); the complex mediates ubiquitination and proteasomal degradation of NEDD9/HEF1. Interacts (via WW domains) with OCNL. Interacts (via WW domains) with NOTCH1. Interacts (via WW domains) JUN. Interacts with JUNB; the interaction promotes ITCH-mediated ubiquitination and degradation of JUNB. Interacts with FYN; the interaction phosphorylates ITCH on Tyr-381 decreasing binding of JUNB. Interacts (via WW domain 2) with N4BP1; the interaction inhibits the E3 ubiquitin-protein ligase activity. Interacts with NDFIP1 and NDFIP2; the interaction with NDFIP proteins activates the E3 ubiquitin-protein ligase and may induce its recruitment to exosomes. Interacts with ARHGEF7. Interacts with RNF11. Interacts (via the WW 1 domain) with NFE2 (via the PXY motif 1); the interaction promotes 'Lys-63'-linked ubiquitination of NFE2, retains it in the cytoplasm and prevents its transactivation activity. Interacts (via WW domains) with CXCR4 (via C-terminus); the interaction depends on CXCR4 phosphorylation. Found in a complex with E3 ligase DTX3L and ESCRT-0 components HGS and STAM. Interacts with DTX3L (via C-terminus); the interaction is increased upon CXCL12 stimulation and inhibits ITCH catalytic activity (the interaction is direct). Interacts with HGS. Interacts (via WW domains) with PCBP2 within a complex containing ITCH, MAVS and PCBP2. Interacts (via WW domains) with TXNIP (via C-terminus). Interacts with p15 BID. Interacts with ERBB4. Interacts with DTX1. Interacts with SPART. Interacts with SNX9 and SNX18. Interacts (via its WW domains) with ATN1. Interacts (via WW domains) with SGK3. Interacts with CBLC. Interacts with OTUD7B. Interacts (via WW domain 1,2 and 3) with PI4K2A; the interaction inhibits PI4K2A catalytic activity and promotes ITCH catalytic activity. Interacts with ARRDC4. Part of a complex containing ITCH, NDFIP1 and MAP3K7. Interacts with UBE2L3; the interaction is mediated by NDFIP1. Interacts with MAPK8/JNK1. Interacts (via WW domains) with ARRDC1 (via PPxY motifs); the interaction is direct and participates in the recruitment of the ubiquitin-protein ligase ITCH to the NOTCH1 receptor. Interacts (via WW domains) with ARRDC2. Interacts (via WW domains) with ARRDC3. Interacts directly with LDLRAD3; this interaction promotes ITCH auto-ubiquitination leading to its degradation. Interacts with ENTREP1; enhances the ubiquitination of CXCR4 by ITCH and its subsequent endocytosis. Interacts with USP12 and WDR48/UAF1; the interaction is more efficient when both USP12 and WDR48/UAF1 are involved and may facilitate the recruitment of the USP12 deubiquitinase complex to Notch. In terms of assembly, (Microbial infection) Interacts with Epstein-Barr virus LMP2A. On T-cell activation, phosphorylation by the JNK cascade on serine and threonine residues surrounding the PRR domain accelerates the ubiquitination and degradation of JUN and JUNB. The increased ITCH catalytic activity due to phosphorylation by JNK1 may occur due to a conformational change disrupting the interaction between the PRR/WW motifs domain and the HECT domain and, thus exposing the HECT domain. Phosphorylation by FYN reduces interaction with JUNB and negatively controls JUN ubiquitination and degradation. Interacts directly with LDLRAD3; this interaction promotes ITCH auto-ubiquitination leading to its degradation. Post-translationally, monoubiquitinated. Autopolyubiquitinated with 'Lys-63' linkages which does not lead to protein degradation. As to expression, detected in uterus (at protein level). Widely expressed.

It localises to the cell membrane. The protein resides in the cytoplasm. It is found in the nucleus. The protein localises to the early endosome membrane. Its subcellular location is the endosome membrane. It catalyses the reaction S-ubiquitinyl-[E2 ubiquitin-conjugating enzyme]-L-cysteine + [acceptor protein]-L-lysine = [E2 ubiquitin-conjugating enzyme]-L-cysteine + N(6)-ubiquitinyl-[acceptor protein]-L-lysine.. It functions in the pathway protein modification; protein ubiquitination. Activated by NDFIP1- and NDFIP2-binding. Activated by PI4K2A-binding. Inhibited by DTX3L-binding. Inhibited by N4BP1 binding. Its function is as follows. Acts as an E3 ubiquitin-protein ligase which accepts ubiquitin from an E2 ubiquitin-conjugating enzyme in the form of a thioester and then directly transfers the ubiquitin to targeted substrates. It catalyzes 'Lys-29'-, 'Lys-48'- and 'Lys-63'-linked ubiquitin conjugation. Involved in the control of inflammatory signaling pathways. Is an essential component of a ubiquitin-editing protein complex, comprising also TNFAIP3, TAX1BP1 and RNF11, that ensures the transient nature of inflammatory signaling pathways. Promotes the association of the complex after TNF stimulation. Once the complex is formed, TNFAIP3 deubiquitinates 'Lys-63' polyubiquitin chains on RIPK1 and catalyzes the formation of 'Lys-48'-polyubiquitin chains. This leads to RIPK1 proteasomal degradation and consequently termination of the TNF- or LPS-mediated activation of NFKB1. Ubiquitinates RIPK2 by 'Lys-63'-linked conjugation and influences NOD2-dependent signal transduction pathways. Regulates the transcriptional activity of several transcription factors involved in immune response. Ubiquitinates NFE2 by 'Lys-63' linkages and is implicated in the control of the development of hematopoietic lineages. Mediates JUN ubiquitination and degradation. Mediates JUNB ubiquitination and degradation. Critical regulator of type 2 helper T (Th2) cell cytokine production by inducing JUNB ubiquitination and degradation. Involved in the negative regulation of MAVS-dependent cellular antiviral responses. Ubiquitinates MAVS through 'Lys-48'-linked conjugation resulting in MAVS proteasomal degradation. Following ligand stimulation, regulates sorting of Wnt receptor FZD4 to the degradative endocytic pathway probably by modulating PI42KA activity. Ubiquitinates PI4K2A and negatively regulates its catalytic activity. Ubiquitinates chemokine receptor CXCR4 and regulates sorting of CXCR4 to the degradative endocytic pathway following ligand stimulation by ubiquitinating endosomal sorting complex required for transport ESCRT-0 components HGS and STAM. Targets DTX1 for lysosomal degradation and controls NOTCH1 degradation, in the absence of ligand, through 'Lys-29'-linked polyubiquitination. Ubiquitinates SNX9. Ubiquitinates MAP3K7 through 'Lys-48'-linked conjugation. Together with UBR5, involved in the regulation of apoptosis and reactive oxygen species levels through the ubiquitination and proteasomal degradation of TXNIP: catalyzes 'Lys-48'-/'Lys-63'-branched ubiquitination of TXNIP. ITCH synthesizes 'Lys-63'-linked chains, while UBR5 is branching multiple 'Lys-48'-linked chains of substrate initially modified. Mediates the antiapoptotic activity of epidermal growth factor through the ubiquitination and proteasomal degradation of p15 BID. Ubiquitinates BRAT1 and this ubiquitination is enhanced in the presence of NDFIP1. Ubiquitinates NEDD9/HEF1, resulting in proteasomal degradation of NEDD9/HEF1. The sequence is that of E3 ubiquitin-protein ligase Itchy (Itch) from Mus musculus (Mouse).